The primary structure comprises 476 residues: 2-(3-amino-3-carboxypropyl)histidine synthase subunit 2 (476 aa).

The span at 1 to 15 shows a compositional bias: polar residues; it reads MTESAPSAFFTTSTP. The segment at 1 to 24 is disordered; it reads MTESAPSAFFTTSTPADHVHEEES. [4Fe-4S] cluster is bound by residues C102, C123, and C347. The disordered stretch occupies residues 451–476; it reads DGVSTAEDSTKMGEGRSGIAQGYSGK.

This sequence belongs to the DPH1/DPH2 family. DPH2 subfamily. Component of the 2-(3-amino-3-carboxypropyl)histidine synthase complex composed of dph-1, dph-2, dph-3 and a NADH-dependent reductase. It depends on [4Fe-4S] cluster as a cofactor.

It participates in protein modification; peptidyl-diphthamide biosynthesis. Its function is as follows. Required for the first step of diphthamide biosynthesis, a post-translational modification of histidine which occurs in elongation factor 2. Dph-1 and dph-2 transfer a 3-amino-3-carboxypropyl (ACP) group from S-adenosyl-L-methionine (SAM) to a histidine residue, the reaction is assisted by a reduction system comprising dph-3 and a NADH-dependent reductase. Facilitates the reduction of the catalytic iron-sulfur cluster found in the dph-1 subunit. The protein is 2-(3-amino-3-carboxypropyl)histidine synthase subunit 2 (dph-2) of Caenorhabditis elegans.